Consider the following 378-residue polypeptide: MRSRVPRKEIKSLAFALYDTGETILGALVVSTFFPLFITKHIDVKIYSLSYGISLLASFALAIFLGKLADENALRKKFFTLFSLLTSLFLSSIALLYGTPYLALLSFLLMLISHQQAMVFYNSLLLNFENKGFASGLGVSFGYVGSAIALIFLADKLKEPEVYAVVGLIFLILAVPSIITLENPEISAKISLKEIFGDRTFLLFLLSLLTLTEVANTLIAMMGVYLREVYSLESVEIYRIIGFSALGGVLGGIFWGVLTDKLNVNRVFPLGFFLWSFFFILLFFAKKDYLIFVGLLAGFSLAHLWSTSRVYILENFPKESVSVRMSFLSLTERVASSFGLFLWSFFLFITQDNFRLSALLMGTLPLIGFFIYLKTKLD.

11 helical membrane passes run 12–34 (SLAF…STFF), 44–66 (VKIY…IFLG), 92–112 (SIAL…LMLI), 132–154 (GFAS…IFLA), 161–180 (EVYA…SIIT), 200–222 (TFLL…IAMM), 235–257 (VEIY…FWGV), 267–285 (VFPL…LFFA), 290–312 (LIFV…RVYI), 327–349 (FLSL…FLFI), and 356–373 (LSAL…FIYL).

It is found in the cell membrane. This is an uncharacterized protein from Aquifex aeolicus (strain VF5).